The chain runs to 120 residues: Aspartate 1-decarboxylase (120 aa).

Ser25 acts as the Schiff-base intermediate with substrate; via pyruvic acid in catalysis. Ser25 bears the Pyruvic acid (Ser) mark. Residue Thr57 participates in substrate binding. Tyr58 (proton donor) is an active-site residue. Residue 73 to 75 coordinates substrate; sequence GAA.

This sequence belongs to the PanD family. Heterooctamer of four alpha and four beta subunits. The cofactor is pyruvate. Is synthesized initially as an inactive proenzyme, which is activated by self-cleavage at a specific serine bond to produce a beta-subunit with a hydroxyl group at its C-terminus and an alpha-subunit with a pyruvoyl group at its N-terminus.

The protein resides in the cytoplasm. The catalysed reaction is L-aspartate + H(+) = beta-alanine + CO2. Its pathway is cofactor biosynthesis; (R)-pantothenate biosynthesis; beta-alanine from L-aspartate: step 1/1. In terms of biological role, catalyzes the pyruvoyl-dependent decarboxylation of aspartate to produce beta-alanine. The protein is Aspartate 1-decarboxylase of Coprothermobacter proteolyticus (strain ATCC 35245 / DSM 5265 / OCM 4 / BT).